A 138-amino-acid chain; its full sequence is Large ribosomal subunit protein uL16 (138 aa).

The segment covering 1-18 (MALMPKRVKHRKSQRGRI) has biased composition (basic residues). Residues 1 to 21 (MALMPKRVKHRKSQRGRIKGN) form a disordered region.

The protein belongs to the universal ribosomal protein uL16 family. As to quaternary structure, part of the 50S ribosomal subunit.

Binds 23S rRNA and is also seen to make contacts with the A and possibly P site tRNAs. The sequence is that of Large ribosomal subunit protein uL16 from Rhodopirellula baltica (strain DSM 10527 / NCIMB 13988 / SH1).